The following is a 101-amino-acid chain: NAD(P)H-quinone oxidoreductase subunit 4L, chloroplastic (101 aa).

3 helical membrane passes run 2-22, 32-52, and 61-81; these read ILEH…YGLI, MCLE…SDFF, and IFCI…LAIV.

This sequence belongs to the complex I subunit 4L family. NDH is composed of at least 16 different subunits, 5 of which are encoded in the nucleus.

The protein localises to the plastid. It localises to the chloroplast thylakoid membrane. It carries out the reaction a plastoquinone + NADH + (n+1) H(+)(in) = a plastoquinol + NAD(+) + n H(+)(out). The enzyme catalyses a plastoquinone + NADPH + (n+1) H(+)(in) = a plastoquinol + NADP(+) + n H(+)(out). NDH shuttles electrons from NAD(P)H:plastoquinone, via FMN and iron-sulfur (Fe-S) centers, to quinones in the photosynthetic chain and possibly in a chloroplast respiratory chain. The immediate electron acceptor for the enzyme in this species is believed to be plastoquinone. Couples the redox reaction to proton translocation, and thus conserves the redox energy in a proton gradient. The polypeptide is NAD(P)H-quinone oxidoreductase subunit 4L, chloroplastic (Olimarabidopsis pumila (Dwarf rocket)).